The sequence spans 106 residues: MKELQEHELDHIEDDVYLLYLYTPFCGTCQLASKMLTVVKEMLPDVAFYQNNVNYSPTFAKAYQIESVPCFLLFKGGKMVERGYAFHSVSYLYELIKQKSSSASHL.

The Thioredoxin domain occupies 1–101 (MKELQEHELD…LYELIKQKSS (101 aa)). C26 and C29 form a disulfide bridge.

The sequence is that of Thioredoxin-like protein YusE (yusE) from Bacillus subtilis (strain 168).